Consider the following 918-residue polypeptide: MQRSIMSFFQPTTTEGKAKKPEKEIPSSIREKEPPPKVALKERNRAVPESDSPVKRPGRKVAQVLSSEGEDEDEAPGTPQVQKPVSDSKQSSPPSPDSCPENSPVFNCSPSMDISPSGFPKRRTARKQLPKRTIQDTLEEPNEDKAKAVKKRKKEDPQTPPESLTEAEEVNQKEEQVEDQPTVPPEPTESPESVTLTKTENIPMCKAGVKQKPQEEEQSKPPARGAKPLSSFFTPRKPAVKTEVKQEESDTPRKEETKGAPDPTNYNPSKSNYHPIEDACWKHGQKVPFLAVARTFEKIEEVSARLKMVETLSNLLRSVVALSPTDLLPVLYLSLNRLGPPQQGLELGVGDGVLLKAVAQATGRQLESIRAEVAEKGDVGLVAENSRSTQRLMLPSPPLTVSGVFTKFCDIARLTGSASMAKKMDIIKGLFVACRYSEARFIARSLSGRLRLGLAEQSVLAALAQAGSLTPPGQEFPTVVVDAGKGKTAEARKMWLEEQGMILKQTFCEVPDLDRIIPVLLEHGLESLPEHCKLSPGVPLKPMLAHPTRGVREVLKRFEEVDFTCEYKYYGQRAQIHVLEGGEVKIFSRNQEDNSGKYPDIISRIPKIKHPSVTSFILDTEAVAWDREKKQIQPFQVLTTRKRKEVDASEIQVQVCLYAFDLIYLNGESLARQPLSRRRQLLRENFVETEGEFVFATSLDTKDIEQIAEFLEQSVKDSCEGLMVKTLDVDATYEIAKRSHNWLKLKKDYLEGVGDTLDLVVIGAYLGRGKRPGRYGGFLLAAYDEESEELAAICKLGTGFSDEELEEHHQNMQALLLPTPRPYVRIDGAVAPNHWLDPSIVWEVKCADLTLSPIYRAARGMVDKEKGISLRFPRFIRVREDKQPEQATTSDQVASLYRKQSQIQNQQSSDLDSDVEDY.

A compositionally biased stretch (polar residues) spans 1–15 (MQRSIMSFFQPTTTE). Positions 1–271 (MQRSIMSFFQ…DPTNYNPSKS (271 aa)) are disordered. Residues 16 to 54 (GKAKKPEKEIPSSIREKEPPPKVALKERNRAVPESDSPV) show a composition bias toward basic and acidic residues. Phosphoserine occurs at positions 50, 52, 66, and 67. A Phosphothreonine modification is found at Thr78. Positions 81–92 (VQKPVSDSKQSS) are enriched in low complexity. Polar residues predominate over residues 100 to 114 (PENSPVFNCSPSMDI). Residues 120–130 (PKRRTARKQLP) show a composition bias toward basic residues. Lys145 is modified (N6-acetyllysine). Residue Thr195 is modified to Phosphothreonine. At Lys227 the chain carries N6-acetyllysine. Phosphoserine is present on residues Ser230 and Ser231. The residue at position 234 (Thr234) is a Phosphothreonine. Positions 240 to 259 (VKTEVKQEESDTPRKEETKG) are enriched in basic and acidic residues. Residue Glu566 coordinates ATP. The active-site N6-AMP-lysine intermediate is Lys568. ATP contacts are provided by Arg573 and Glu621. Glu621 is a binding site for Mg(2+). The segment at 642–644 (KRK) is interaction with target DNA. Glu720 provides a ligand contact to Mg(2+). ATP is bound by residues Lys725 and Lys744. Thr798 is modified (phosphothreonine). Phosphoserine occurs at positions 801, 908, 909, and 913. Positions 881 to 918 (DKQPEQATTSDQVASLYRKQSQIQNQQSSDLDSDVEDY) are disordered. Positions 885–910 (EQATTSDQVASLYRKQSQIQNQQSSD) are enriched in polar residues.

It belongs to the ATP-dependent DNA ligase family. In terms of assembly, interacts with PCNA. Interacts with POLB. Requires Mg(2+) as cofactor.

It localises to the nucleus. The enzyme catalyses ATP + (deoxyribonucleotide)n-3'-hydroxyl + 5'-phospho-(deoxyribonucleotide)m = (deoxyribonucleotide)n+m + AMP + diphosphate.. In terms of biological role, DNA ligase that seals nicks in double-stranded during DNA repair. Also involved in DNA replication and DNA recombination. In Rattus norvegicus (Rat), this protein is DNA ligase 1 (Lig1).